Here is a 564-residue protein sequence, read N- to C-terminus: Arginine--tRNA ligase (564 aa).

The 'HIGH' region motif lies at 122-132; sequence PNIAKPFSIGH.

Belongs to the class-I aminoacyl-tRNA synthetase family. As to quaternary structure, monomer.

It is found in the cytoplasm. The enzyme catalyses tRNA(Arg) + L-arginine + ATP = L-arginyl-tRNA(Arg) + AMP + diphosphate. This Lactococcus lactis subsp. cremoris (strain MG1363) protein is Arginine--tRNA ligase.